Reading from the N-terminus, the 499-residue chain is Bifunctional purine biosynthesis protein PurH (499 aa).

Residues methionine 1–threonine 144 form the MGS-like domain.

This sequence belongs to the PurH family.

The enzyme catalyses (6R)-10-formyltetrahydrofolate + 5-amino-1-(5-phospho-beta-D-ribosyl)imidazole-4-carboxamide = 5-formamido-1-(5-phospho-D-ribosyl)imidazole-4-carboxamide + (6S)-5,6,7,8-tetrahydrofolate. It catalyses the reaction IMP + H2O = 5-formamido-1-(5-phospho-D-ribosyl)imidazole-4-carboxamide. It functions in the pathway purine metabolism; IMP biosynthesis via de novo pathway; 5-formamido-1-(5-phospho-D-ribosyl)imidazole-4-carboxamide from 5-amino-1-(5-phospho-D-ribosyl)imidazole-4-carboxamide (10-formyl THF route): step 1/1. The protein operates within purine metabolism; IMP biosynthesis via de novo pathway; IMP from 5-formamido-1-(5-phospho-D-ribosyl)imidazole-4-carboxamide: step 1/1. The polypeptide is Bifunctional purine biosynthesis protein PurH (Clostridium botulinum (strain Hall / ATCC 3502 / NCTC 13319 / Type A)).